Consider the following 260-residue polypeptide: Thiazole synthase (260 aa).

K96 (schiff-base intermediate with DXP) is an active-site residue. Residues G157, 184–185 (AG), and 206–207 (NT) each bind 1-deoxy-D-xylulose 5-phosphate.

It belongs to the ThiG family. As to quaternary structure, homotetramer. Forms heterodimers with either ThiH or ThiS.

It is found in the cytoplasm. The enzyme catalyses [ThiS sulfur-carrier protein]-C-terminal-Gly-aminoethanethioate + 2-iminoacetate + 1-deoxy-D-xylulose 5-phosphate = [ThiS sulfur-carrier protein]-C-terminal Gly-Gly + 2-[(2R,5Z)-2-carboxy-4-methylthiazol-5(2H)-ylidene]ethyl phosphate + 2 H2O + H(+). It participates in cofactor biosynthesis; thiamine diphosphate biosynthesis. In terms of biological role, catalyzes the rearrangement of 1-deoxy-D-xylulose 5-phosphate (DXP) to produce the thiazole phosphate moiety of thiamine. Sulfur is provided by the thiocarboxylate moiety of the carrier protein ThiS. In vitro, sulfur can be provided by H(2)S. In Bradyrhizobium diazoefficiens (strain JCM 10833 / BCRC 13528 / IAM 13628 / NBRC 14792 / USDA 110), this protein is Thiazole synthase.